Reading from the N-terminus, the 452-residue chain is CASP-like protein 4A1 (452 aa).

A compositionally biased stretch (basic and acidic residues) spans 1-17 (MGLRDSLKEREDRRSSE). 3 disordered regions span residues 1-39 (MGLR…RKES), 71-147 (RAGP…ARSS), and 164-283 (AKYV…VQFR). Topologically, residues 1 to 305 (MGLRDSLKER…KRRAAAMQRT (305 aa)) are cytoplasmic. A compositionally biased stretch (polar residues) spans 25–34 (SWMTRESTTG). Low complexity-rich tracts occupy residues 105-126 (QAQA…TGSG) and 190-205 (GWYS…AAPP). Residues 211–272 (DPPPAPPRRQ…TAPAPAPVPA (62 aa)) show a composition bias toward pro residues. A helical transmembrane segment spans residues 306–326 (ALLARGAAAGLCLAALAVLAA). At 327–347 (DTRKGWARDSYSNYTQFRYSE) the chain is on the extracellular side. A glycan (N-linked (GlcNAc...) asparagine) is linked at N339. The helical transmembrane segment at 348–368 (AVNVIGFIYSVFQFVALVELM) threads the bilayer. Topologically, residues 369 to 389 (RRNKHLIPHPKRDLFDFTMDQ) are cytoplasmic. The chain crosses the membrane as a helical span at residues 390 to 406 (VLTYLLISSSSSATARV). Topologically, residues 407-423 (SDLIDNWGSDPFPSMAN) are extracellular. An N-linked (GlcNAc...) asparagine glycan is attached at N423. The chain crosses the membrane as a helical span at residues 424-444 (GSIAISFLAFAVFAICSLISA). The Cytoplasmic segment spans residues 445-452 (YNLFRRDV).

Belongs to the Casparian strip membrane proteins (CASP) family. Homodimer and heterodimers.

The protein localises to the cell membrane. The chain is CASP-like protein 4A1 from Sorghum bicolor (Sorghum).